We begin with the raw amino-acid sequence, 1152 residues long: Nucleolar protein 6 (1152 aa).

Disordered stretches follow at residues 1–30 (MPSAGERPAVKMGPAPAGEQHRRATEDPEV) and 36–55 (EGMDKEKAPSRKRARTEPPA). S65 carries the post-translational modification Phosphoserine. Positions 92–128 (LLRLQVEELLKEVRLSEKKKERIDNFLKEVTKRIQKV) form a coiled coil. A phosphoserine mark is found at S292 and S817.

Belongs to the NRAP family. Part of the small subunit (SSU) processome, composed of more than 70 proteins and the RNA chaperone small nucleolar RNA (snoRNA) U3. Interacts with RRP7A; required for NOL6 localization to nucleolus. In terms of tissue distribution, ubiquitously expressed.

The protein resides in the nucleus. Its subcellular location is the nucleolus. It is found in the chromosome. Part of the small subunit (SSU) processome, first precursor of the small eukaryotic ribosomal subunit. During the assembly of the SSU processome in the nucleolus, many ribosome biogenesis factors, an RNA chaperone and ribosomal proteins associate with the nascent pre-rRNA and work in concert to generate RNA folding, modifications, rearrangements and cleavage as well as targeted degradation of pre-ribosomal RNA by the RNA exosome. This Mus musculus (Mouse) protein is Nucleolar protein 6 (Nol6).